Consider the following 207-residue polypeptide: ATP-dependent Clp protease proteolytic subunit (207 aa).

Serine 111 functions as the Nucleophile in the catalytic mechanism. Histidine 136 is a catalytic residue.

This sequence belongs to the peptidase S14 family. In terms of assembly, fourteen ClpP subunits assemble into 2 heptameric rings which stack back to back to give a disk-like structure with a central cavity, resembling the structure of eukaryotic proteasomes. Component of the ClpAP and ClpXP complexes.

The protein localises to the cytoplasm. It carries out the reaction Hydrolysis of proteins to small peptides in the presence of ATP and magnesium. alpha-casein is the usual test substrate. In the absence of ATP, only oligopeptides shorter than five residues are hydrolyzed (such as succinyl-Leu-Tyr-|-NHMec, and Leu-Tyr-Leu-|-Tyr-Trp, in which cleavage of the -Tyr-|-Leu- and -Tyr-|-Trp bonds also occurs).. In terms of biological role, cleaves peptides in various proteins in a process that requires ATP hydrolysis. Has a chymotrypsin-like activity. Plays a major role in the degradation of misfolded proteins. This is ATP-dependent Clp protease proteolytic subunit from Escherichia coli O139:H28 (strain E24377A / ETEC).